We begin with the raw amino-acid sequence, 940 residues long: UvrABC system protein A (940 aa).

31 to 38 (GLSGSGKS) provides a ligand contact to ATP. The C4-type zinc finger occupies 252–279 (CPHCGYSMQELEPRLFSFNNPAGACGTC). 2 ABC transporter domains span residues 309–586 (WDQK…PDSL) and 606–936 (RDKN…RFLK). Position 639–646 (639–646 (GVSGSGKS)) interacts with ATP. Residues 739 to 765 (CEACQGDGVIKVEMHFLPDVYVPCDVC) form a C4-type zinc finger.

Belongs to the ABC transporter superfamily. UvrA family. Forms a heterotetramer with UvrB during the search for lesions.

Its subcellular location is the cytoplasm. The UvrABC repair system catalyzes the recognition and processing of DNA lesions. UvrA is an ATPase and a DNA-binding protein. A damage recognition complex composed of 2 UvrA and 2 UvrB subunits scans DNA for abnormalities. When the presence of a lesion has been verified by UvrB, the UvrA molecules dissociate. In Vibrio vulnificus (strain CMCP6), this protein is UvrABC system protein A.